The sequence spans 476 residues: Proline--tRNA ligase 2 (476 aa).

Belongs to the class-II aminoacyl-tRNA synthetase family. ProS type 3 subfamily. Homodimer.

It is found in the cytoplasm. It catalyses the reaction tRNA(Pro) + L-proline + ATP = L-prolyl-tRNA(Pro) + AMP + diphosphate. Its function is as follows. Catalyzes the attachment of proline to tRNA(Pro) in a two-step reaction: proline is first activated by ATP to form Pro-AMP and then transferred to the acceptor end of tRNA(Pro). The polypeptide is Proline--tRNA ligase 2 (Bacillus thuringiensis subsp. konkukian (strain 97-27)).